The following is a 419-amino-acid chain: Tubby-like protein 4 (419 aa).

Residues 1–96 (MAATKREPLR…EREEEEEGSS (96 aa)) form a disordered region. A compositionally biased stretch (basic and acidic residues) spans 33–57 (AKEKEKENEVPTEIGRGKDGGEKKP).

The protein belongs to the TUB family.

This is Tubby-like protein 4 (TULP4) from Oryza sativa subsp. japonica (Rice).